A 145-amino-acid chain; its full sequence is D-aminoacyl-tRNA deacylase (145 aa).

A Gly-cisPro motif, important for rejection of L-amino acids motif is present at residues 137 to 138 (GP).

This sequence belongs to the DTD family. Homodimer.

It localises to the cytoplasm. It catalyses the reaction glycyl-tRNA(Ala) + H2O = tRNA(Ala) + glycine + H(+). It carries out the reaction a D-aminoacyl-tRNA + H2O = a tRNA + a D-alpha-amino acid + H(+). Functionally, an aminoacyl-tRNA editing enzyme that deacylates mischarged D-aminoacyl-tRNAs. Also deacylates mischarged glycyl-tRNA(Ala), protecting cells against glycine mischarging by AlaRS. Acts via tRNA-based rather than protein-based catalysis; rejects L-amino acids rather than detecting D-amino acids in the active site. By recycling D-aminoacyl-tRNA to D-amino acids and free tRNA molecules, this enzyme counteracts the toxicity associated with the formation of D-aminoacyl-tRNA entities in vivo and helps enforce protein L-homochirality. This Salmonella paratyphi C (strain RKS4594) protein is D-aminoacyl-tRNA deacylase.